The primary structure comprises 485 residues: Glutamate--tRNA ligase 1 (485 aa).

The short motif at 10-20 is the 'HIGH' region element; sequence PSPTGAIHIGN. Residues 252 to 256 carry the 'KMSKS' region motif; sequence KLSKR. Lys255 provides a ligand contact to ATP.

The protein belongs to the class-I aminoacyl-tRNA synthetase family. Glutamate--tRNA ligase type 1 subfamily. Monomer.

The protein localises to the cytoplasm. The enzyme catalyses tRNA(Glu) + L-glutamate + ATP = L-glutamyl-tRNA(Glu) + AMP + diphosphate. In terms of biological role, catalyzes the attachment of glutamate to tRNA(Glu) in a two-step reaction: glutamate is first activated by ATP to form Glu-AMP and then transferred to the acceptor end of tRNA(Glu). In Thermoanaerobacter sp. (strain X514), this protein is Glutamate--tRNA ligase 1.